We begin with the raw amino-acid sequence, 293 residues long: MRKNRILALFVLSLGLLSFMVTPVSAASKGNLLSPDRILTVAHRGASGYVPEHTILSYETAQKMKADFIELDLQMTKDGKLIVMHDEKLDRTTNGMGWVKDHTLADIKKLDAGSWFNEAYPEKAKPQYVGLKVPTLEEVLDRFGKHANYYIETKSPDTYPGMEEKLIASLQKHKLLGKHSKPGQVIIQSFSKESLVKVHQLQPNLPTVQLLEAKQMASMTDAALEEIKTYAVGAGPDYKALNQENVRMIRSHGLLLHPYTVNNEADMHRLLDWGVTGVFTNYPDLFHKVKKGY.

An N-terminal signal peptide occupies residues 1–26; the sequence is MRKNRILALFVLSLGLLSFMVTPVSA. A GP-PDE domain is found at 38–290; the sequence is ILTVAHRGAS…NYPDLFHKVK (253 aa). H43 (proton acceptor) is an active-site residue. Sn-glycerol 3-phosphate-binding residues include H43, R44, and E70. E70 and D72 together coordinate Ca(2+). Positions 85, 152, and 188 each coordinate sn-glycerol 3-phosphate. H85 functions as the Proton donor in the catalytic mechanism. Residue E152 participates in Ca(2+) binding.

It belongs to the glycerophosphoryl diester phosphodiesterase family. Requires Ca(2+) as cofactor.

Its subcellular location is the secreted. The enzyme catalyses a sn-glycero-3-phosphodiester + H2O = an alcohol + sn-glycerol 3-phosphate + H(+). Its function is as follows. Glycerophosphodiester phosphodiesterase hydrolyzes glycerophosphodiesters into glycerol-3-phosphate (G3P) and the corresponding alcohol. Involved in wall teichoic acid (WTA) metabolism during phosphate starvation. Catalyzes the degradation of WTA, enabling the utilization of WTA as a phosphate reserve under limiting conditions. Is highly selective for the poly(gylcerol phosphate) WTA backbone and catalyzes exolytic cleavage of individual monomer units. In vitro is active toward the WTA oligomer mimics glycerophosphoglycerol (GPG) and bis-glycerophosphoglycerol (bGPG). This chain is Glycerophosphodiester phosphodiesterase, found in Bacillus subtilis (strain 168).